The following is a 160-amino-acid chain: Large ribosomal subunit protein uL13 (160 aa).

It belongs to the universal ribosomal protein uL13 family. As to quaternary structure, part of the 50S ribosomal subunit.

This protein is one of the early assembly proteins of the 50S ribosomal subunit, although it is not seen to bind rRNA by itself. It is important during the early stages of 50S assembly. The sequence is that of Large ribosomal subunit protein uL13 from Orientia tsutsugamushi (strain Ikeda) (Rickettsia tsutsugamushi).